The primary structure comprises 959 residues: Translation initiation factor IF-2 (959 aa).

Over residues 1 to 10 (MSDKTNDDKT) the composition is skewed to basic and acidic residues. Residues 1 to 374 (MSDKTNDDKT…SQMQETREKI (374 aa)) form a disordered region. Over residues 27–37 (EQSTVRQNFSH) the composition is skewed to polar residues. 2 stretches are compositionally biased toward low complexity: residues 63–118 (AAAA…VTKP) and 128–138 (QRPGGQQAQRP). Basic and acidic residues-rich tracts occupy residues 154-225 (SEMD…EAAK) and 232-241 (ARSERRDDAR). Residues 246-284 (GARPQQAGRPQGGRPQPAGRPQQGSPRPAPIIADAAPIA) are compositionally biased toward low complexity. Over residues 318–333 (PEVRAPKVVKGEDDRR) the composition is skewed to basic and acidic residues. A tr-type G domain is found at 457–626 (SRPPVVTIMG…LLQAEMLDLK (170 aa)). Residues 466 to 473 (GHVDHGKT) are G1. 466-473 (GHVDHGKT) serves as a coordination point for GTP. Residues 491-495 (GITQH) form a G2 region. The tract at residues 512–515 (DTPG) is G3. Residues 512-516 (DTPGH) and 566-569 (NKID) contribute to the GTP site. The G4 stretch occupies residues 566 to 569 (NKID). Residues 602–604 (SAK) are G5.

Belongs to the TRAFAC class translation factor GTPase superfamily. Classic translation factor GTPase family. IF-2 subfamily.

The protein localises to the cytoplasm. In terms of biological role, one of the essential components for the initiation of protein synthesis. Protects formylmethionyl-tRNA from spontaneous hydrolysis and promotes its binding to the 30S ribosomal subunits. Also involved in the hydrolysis of GTP during the formation of the 70S ribosomal complex. This Brucella melitensis biotype 1 (strain ATCC 23456 / CCUG 17765 / NCTC 10094 / 16M) protein is Translation initiation factor IF-2.